Reading from the N-terminus, the 332-residue chain is Melanocortin receptor 4 (332 aa).

Residues 1–43 (MNSTLQHGMHTSLHFWNRSTYGQHSNATESLGKGYPDGGCYEQ) lie on the Extracellular side of the membrane. Asn-2, Asn-17, and Asn-26 each carry an N-linked (GlcNAc...) asparagine glycan. 2 cysteine pairs are disulfide-bonded: Cys-40–Cys-279 and Cys-271–Cys-277. Residues 44–69 (LFVSPEVFVTLGVISLLENILVIVAI) form a helical membrane-spanning segment. The Cytoplasmic segment spans residues 70–81 (AKNKNLHSPMYF). Residues 82-106 (FICSLAVADMLVSVSNGSETIVITL) traverse the membrane as a helical segment. Positions 100, 122, and 126 each coordinate Ca(2+). Residues 107-123 (LNSTDTDAQSFTVNIDN) lie on the Extracellular side of the membrane. The chain crosses the membrane as a helical span at residues 124–145 (VIDSVICSSLLASICSLLSIAV). The Cytoplasmic segment spans residues 146-165 (DRYFTIFYALQYHNIMTVRR). Residues 166–186 (VGIIISCIWAACTVSGILFII) form a helical membrane-spanning segment. Topologically, residues 187–191 (YSDST) are extracellular. A helical transmembrane segment spans residues 192-215 (AVIICLITMFFTMLALMASLYVHM). The Cytoplasmic segment spans residues 216-248 (FLMARLHIKRIAVLPGTGTIRQGANMKGAITLT). Residues 249–271 (ILIGVFVVCWAPFFLHLIFYISC) form a helical membrane-spanning segment. At 272-280 (PQNPYCVCF) the chain is on the extracellular side. A helical transmembrane segment spans residues 281-304 (MSHFNLYLILIMCNSIIDPLIYAL). Residues 305 to 332 (RSQELRKTFKEIICCYPLGGLCDLSSRY) lie on the Cytoplasmic side of the membrane. Residue Cys-318 is the site of S-palmitoyl cysteine attachment.

Belongs to the G-protein coupled receptor 1 family. Homodimer; disulfide-linked, also forms higher order oligomers. Interacts with GNAS. Interacts with ATRNL1. Interacts with MGRN1; this interaction competes with GNAS-binding and thus inhibits agonist-induced cAMP production. Interacts with MRAP and MRAP2; these associated factors increase ligand-sensitivity and generation of cAMP.

The protein resides in the cell membrane. Functionally, hormone receptor that acts as a key component of the leptin-melanocortin pathway at the intersection of homeostatic maintenance of energetic state. Plays a role in regulating food intake: activation by a stimulating hormone such as anorexigenic alpha-melanocyte stimulating hormone (alpha-MSH) inhibits appetite, whereas binding to a natural antagonist like Agouti-related protein/AGRP promotes appetite. G-protein-coupled receptor that activates conventional Galphas signaling leading to induction of anorexogenic signaling in the hypothalamus to result in negative energy balance. Regulates the firing activity of neurons from the hypothalamus by alpha-MSH and AGRP independently of Galphas signaling by ligand-induced coupling of closure of inwardly rectifying potassium channel KCNJ13. In intestinal epithelial cells, plays a role in the inhibition of hepatic glucose production via nesfatin-1/NUCB2 leading to increased cyclic adenosine monophosphate (cAMP) levels and glucagon-like peptide 1 (GLP-1) secretion in the intestinal epithelium. In Vulpes vulpes (Red fox), this protein is Melanocortin receptor 4 (MC4R).